A 433-amino-acid polypeptide reads, in one-letter code: Tol-Pal system protein TolB (433 aa).

The signal sequence occupies residues 1–21; that stretch reads MIKRLRGLLVMLCCVAGMAVA.

It belongs to the TolB family. As to quaternary structure, the Tol-Pal system is composed of five core proteins: the inner membrane proteins TolA, TolQ and TolR, the periplasmic protein TolB and the outer membrane protein Pal. They form a network linking the inner and outer membranes and the peptidoglycan layer.

Its subcellular location is the periplasm. Its function is as follows. Part of the Tol-Pal system, which plays a role in outer membrane invagination during cell division and is important for maintaining outer membrane integrity. The chain is Tol-Pal system protein TolB from Pseudomonas putida (strain ATCC 47054 / DSM 6125 / CFBP 8728 / NCIMB 11950 / KT2440).